Consider the following 342-residue polypeptide: Oxygen-dependent coproporphyrinogen-III oxidase (342 aa).

Residue Ser-98 coordinates substrate. A divalent metal cation-binding residues include His-102 and His-112. Residue His-112 is the Proton donor of the active site. 114–116 is a substrate binding site; that stretch reads NYR. His-146 and His-176 together coordinate a divalent metal cation. The tract at residues 266 to 301 is important for dimerization; the sequence is YVEFNLVWDRGTIFGLQTNGRTESILMSLPPLARWE.

Belongs to the aerobic coproporphyrinogen-III oxidase family. In terms of assembly, homodimer. It depends on a divalent metal cation as a cofactor.

It is found in the cytoplasm. It carries out the reaction coproporphyrinogen III + O2 + 2 H(+) = protoporphyrinogen IX + 2 CO2 + 2 H2O. It functions in the pathway porphyrin-containing compound metabolism; protoporphyrin-IX biosynthesis; protoporphyrinogen-IX from coproporphyrinogen-III (O2 route): step 1/1. Its function is as follows. Involved in the heme and chlorophyll biosynthesis. Catalyzes the aerobic oxidative decarboxylation of propionate groups of rings A and B of coproporphyrinogen-III to yield the vinyl groups in protoporphyrinogen-IX. This chain is Oxygen-dependent coproporphyrinogen-III oxidase, found in Prochlorococcus marinus (strain MIT 9515).